The primary structure comprises 503 residues: Probable voltage-gated potassium channel subunit kvs-4 (503 aa).

The Cytoplasmic portion of the chain corresponds to 1–231 (MNSAIMQGAA…EPASSGKAQA (231 aa)). The Required for dendritic localization motif lies at 217–219 (WNI). Residues 232 to 252 (FAVCSVVFVLISISGLVLGSL) traverse the membrane as a helical segment. At 253-275 (PELQVATKQRNNLTGEEFTEMEP) the chain is on the extracellular side. Residue Asn264 is glycosylated (N-linked (GlcNAc...) asparagine). Residues 276–296 (MPILGYIEYVCIVWFTMEYGL) traverse the membrane as a helical segment. Residues 297 to 313 (KMLVSAERSKTFRQLLN) are Cytoplasmic-facing. Residues 314-334 (IIDLLAILPFIIEMLLLIFGI) traverse the membrane as a helical segment. The Extracellular portion of the chain corresponds to 335 to 346 (STEQLRDLKGAF). A helical; Voltage-sensor transmembrane segment spans residues 347-366 (LVIRILRVLRVIRVLKLGRY). Residues 367-383 (SSGLQMFGKTLKASFRQ) are Cytoplasmic-facing. An S4-S5 linker region spans residues 368–383 (SGLQMFGKTLKASFRQ). Residues 384 to 404 (LGMMAMVVMTGVIFFSTLVYF) traverse the membrane as a helical segment. The Extracellular portion of the chain corresponds to 405-417 (LEKDEPASKFHSI). The helical intramembrane region spans 418 to 429 (PAACWWCIVTMT). An intramembrane segment occupies 430 to 434 (TVGYG). The Selectivity filter signature appears at 430–435 (TVGYGD). Residues 435–445 (DLTPVTVPGKL) are Extracellular-facing. The helical transmembrane segment at 446 to 466 (VATGAIACGVLVLALPITIIV) threads the bilayer. Over 467–503 (DNFMKVAETERPAGGNRYRTSQYPKATKSEQMILKVT) the chain is Cytoplasmic. The Required for dendritic localization motif lies at 496 to 500 (EQMIL).

The protein belongs to the potassium channel family. B (Shab) (TC 1.A.1.2) subfamily. Kv2.2/KCNB2 sub-subfamily. In terms of assembly, homotetramer or heterotetramer. Interacts with unc-101 (via N-terminus); which targets kvs-4 to dendrites. As to expression, expressed in the cholinergic motor neuron DA9, mechanosensory neurons ALM and PLM, and the interneuron PVPL.

The protein localises to the cell membrane. It localises to the perikaryon. The protein resides in the cell projection. It is found in the axon. Its subcellular location is the dendrite. Functionally, voltage-gated potassium channel that mediates transmembrane potassium transport in excitable membranes. The polypeptide is Probable voltage-gated potassium channel subunit kvs-4 (Caenorhabditis elegans).